Reading from the N-terminus, the 440-residue chain is Signal recognition particle 54 kDa protein (440 aa).

GTP is bound by residues 104 to 111, 184 to 188, and 242 to 245; these read GLQGSGKT, DTAGR, and TKLD.

The protein belongs to the GTP-binding SRP family. SRP54 subfamily. In terms of assembly, part of the signal recognition particle protein translocation system, which is composed of SRP and FtsY. Archaeal SRP consists of a 7S RNA molecule of 300 nucleotides and two protein subunits: SRP54 and SRP19.

Its subcellular location is the cytoplasm. The enzyme catalyses GTP + H2O = GDP + phosphate + H(+). Functionally, involved in targeting and insertion of nascent membrane proteins into the cytoplasmic membrane. Binds to the hydrophobic signal sequence of the ribosome-nascent chain (RNC) as it emerges from the ribosomes. The SRP-RNC complex is then targeted to the cytoplasmic membrane where it interacts with the SRP receptor FtsY. This Methanosarcina acetivorans (strain ATCC 35395 / DSM 2834 / JCM 12185 / C2A) protein is Signal recognition particle 54 kDa protein.